The following is a 115-amino-acid chain: Parathyroid hormone (115 aa).

Residues 1 to 25 (MMSANTVAKVMIIMLAVCLLTQTDG) form the signal peptide. Positions 26 to 31 (KPVRKR) are excised as a propeptide. The tract at residues 51 to 69 (RMQWLRRKLQDMHNFVSLG) is important for receptor binding.

This sequence belongs to the parathyroid hormone family. Interacts with PTH1R (via N-terminal extracellular domain). Highly expressed in the parathyroid gland. Also expressed in the placenta, thymus and testis.

It is found in the secreted. Functionally, parathyroid hormone elevates calcium level by dissolving the salts in bone and preventing their renal excretion. Acts by binding to its receptor, PTH1R, activating G protein-coupled receptor signaling. Stimulates [1-14C]-2-deoxy-D-glucose (2DG) transport and glycogen synthesis in osteoblastic cells. This is Parathyroid hormone from Mus musculus (Mouse).